A 122-amino-acid polypeptide reads, in one-letter code: Large ribosomal subunit protein bL12 (122 aa).

This sequence belongs to the bacterial ribosomal protein bL12 family. As to quaternary structure, homodimer. Part of the ribosomal stalk of the 50S ribosomal subunit. Forms a multimeric L10(L12)X complex, where L10 forms an elongated spine to which 2 to 4 L12 dimers bind in a sequential fashion. Binds GTP-bound translation factors.

In terms of biological role, forms part of the ribosomal stalk which helps the ribosome interact with GTP-bound translation factors. Is thus essential for accurate translation. The sequence is that of Large ribosomal subunit protein bL12 from Deinococcus geothermalis (strain DSM 11300 / CIP 105573 / AG-3a).